The chain runs to 220 residues: Imidazoleglycerol-phosphate dehydratase (220 aa).

Substrate is bound by residues Glu14, 64–72, 90–94, Arg116, and Arg138; these read HMIHALAKH and HHTTE. Residues His64, His90, His91, and Glu94 each coordinate Mn(2+). Mn(2+) is bound by residues His162, His186, His187, and Glu190. Substrate contacts are provided by residues 186–194 and 214–216; these read HHRSESAFK and STK.

This sequence belongs to the imidazoleglycerol-phosphate dehydratase family. Mn(2+) is required as a cofactor.

It catalyses the reaction D-erythro-1-(imidazol-4-yl)glycerol 3-phosphate = 3-(imidazol-4-yl)-2-oxopropyl phosphate + H2O. Its pathway is amino-acid biosynthesis; L-histidine biosynthesis; L-histidine from 5-phospho-alpha-D-ribose 1-diphosphate: step 6/9. The protein is Imidazoleglycerol-phosphate dehydratase of Saccharomyces cerevisiae (strain ATCC 204508 / S288c) (Baker's yeast).